Reading from the N-terminus, the 274-residue chain is Putative hydro-lyase SAV_6940 (274 aa).

The protein belongs to the D-glutamate cyclase family.

In Streptomyces avermitilis (strain ATCC 31267 / DSM 46492 / JCM 5070 / NBRC 14893 / NCIMB 12804 / NRRL 8165 / MA-4680), this protein is Putative hydro-lyase SAV_6940.